Reading from the N-terminus, the 157-residue chain is Arginine regulator (157 aa).

Belongs to the ArgR family.

The protein localises to the cytoplasm. Its pathway is amino-acid degradation; L-arginine degradation via ADI pathway. Functionally, regulates the transcription of the arc operon, involved in arginine catabolism. The chain is Arginine regulator (argR1) from Streptococcus pyogenes serotype M3 (strain ATCC BAA-595 / MGAS315).